The primary structure comprises 567 residues: Protein ESMERALDA 1 (567 aa).

The interval 1 to 41 (MLAKNRLPGSGHTTPSPPASPRRSPRYRHGRSKAAAGSRFP) is disordered. Residues 1-65 (MLAKNRLPGS…ILLSVLLRRQ (65 aa)) are Cytoplasmic-facing. The span at 23-32 (RSPRYRHGRS) shows a compositional bias: basic residues. The chain crosses the membrane as a helical; Signal-anchor for type II membrane protein span at residues 66 to 86 (GIFLFAPLIYISCMLLYMGTV). The Lumenal segment spans residues 87 to 567 (SFDVVPIIQR…TPESRPPPAT (481 aa)). Asn121, Asn145, Asn184, and Asn238 each carry an N-linked (GlcNAc...) asparagine glycan. 331–333 (HLR) contributes to the substrate binding site. Residues Asn403, Asn419, Asn449, Asn538, and Asn554 are each glycosylated (N-linked (GlcNAc...) asparagine).

The protein belongs to the glycosyltransferase GT106 family. Ubiquitous.

The protein resides in the golgi apparatus membrane. It participates in protein modification; protein glycosylation. In terms of biological role, glycosyltransferase that plays a role in cell adhesion. The sequence is that of Protein ESMERALDA 1 from Arabidopsis thaliana (Mouse-ear cress).